Consider the following 1040-residue polypeptide: Exosome RNA helicase MTR4 (1040 aa).

Residue Ala-2 is modified to N-acetylalanine. The interval 16–77 (DSTSAAGAKK…GTDEPIFGKK (62 aa)) is disordered. Positions 23-33 (AKKDKEKEKWK) are enriched in basic and acidic residues. A Glycyl lysine isopeptide (Lys-Gly) (interchain with G-Cter in SUMO2) cross-link involves residue Lys-24. Ser-38 is subject to Phosphoserine. Residues 41-50 (KAGKRLDTKL) show a composition bias toward basic and acidic residues. An N6-acetyllysine mark is found at Lys-49 and Lys-76. ATP contacts are provided by residues Ile-137, 159–166 (AHTSAGKT), Ser-162, Gly-164, Lys-165, and Thr-166. Residues 146 to 302 (IQCVDNNQSV…WICHLHKQPC (157 aa)) enclose the Helicase ATP-binding domain. Residues 250-253 (DEIH) carry the DEIH box motif. A Glycyl lysine isopeptide (Lys-Gly) (interchain with G-Cter in SUMO2) cross-link involves residue Lys-356. The Helicase C-terminal domain maps to 403 to 575 (QMTKLDFNTD…NMVLNLLRVE (173 aa)). Glycyl lysine isopeptide (Lys-Gly) (interchain with G-Cter in SUMO2) cross-links involve residues Lys-682 and Lys-721.

This sequence belongs to the helicase family. SKI2 subfamily. Component of a TRAMP-like complex, an ATP-dependent exosome regulatory complex consisting of a helicase (MTREX), an oligadenylate polymerase (TENT4B or TENT4A), and a substrate specific RNA-binding factor (ZCCHC7 or ZCCHC8). Several TRAMP-like complexes exist with specific compositions and are associated with nuclear, or nucleolar RNA exosomes. Identified in the spliceosome C complex. Component of the poly(A) tail exosome targeting (PAXT) complex made of PABPN1, ZFC3H1 and MTREX that directs a subset of long and polyadenylated poly(A) RNAs for exosomal degradation. Component of the nuclear exosome targeting (NEXT) complex composed of MTREX, ZCCHC8, and RBM7 that directs a subset of non-coding short-lived RNAs for exosomal degradation. Interacts with ZCCHC8; this interaction bridges the interaction between RBM7 and MTREX. Binds to ZFC3H1 and RBM7 in a RNase-insensitive manner. Interacts with EXOSC10; the interaction mediates the association of MTREX with nuclear RNA exosomes. Interacts with isoform 1 of NVL in an ATP-dependent manner; the interaction is required to associate NVL with nuclear RNA exosome. Interacts with WDR74; the interaction dissociation in a late stage of rRNA synthesis is required for appropriate maturation of pre-60S particles and depends on the ATPase activity of NVL. Interacts with MPHOSPH6. Interacts with the RNA cap-binding complex proteins NCBP1 and SRRT. Interacts with NRDE2; the interaction is direct and negatively regulates MTREX function in exosomal degradation by changing its conformation precluding interaction with ZFC3H1, the RNA cap-binding complex proteins NCBP1 and SRRT, and association with the exosome. Associates with the RNA exosome complex.

The protein resides in the nucleus. Its subcellular location is the nucleoplasm. It is found in the nucleolus. The protein localises to the nucleus speckle. It catalyses the reaction ATP + H2O = ADP + phosphate + H(+). With respect to regulation, activated when MTREX is incorporated into NEXT complex an the nuclear RNA exosome complex. Catalyzes the ATP-dependent unwinding of RNA duplexes with a single-stranded 3' RNA extension. Central subunit of many protein complexes, namely TRAMP-like, nuclear exosome targeting (NEXT) and poly(A) tail exosome targeting (PAXT). NEXT functions as an RNA exosome cofactor that directs a subset of non-coding short-lived RNAs for exosomal degradation. NEXT is involved in surveillance and turnover of aberrant transcripts and non-coding RNAs. PAXT directs a subset of long and polyadenylated poly(A) RNAs for exosomal degradation. The RNA exosome is fundamental for the degradation of RNA in eukaryotic nuclei. Substrate targeting is facilitated by its cofactor ZCCHC8, which links to RNA-binding protein adapters. Associated with the RNA exosome complex and involved in the 3'-processing of the 7S pre-RNA to the mature 5.8S rRNA. May be involved in pre-mRNA splicing. In the context of NEXT complex can also in vitro unwind DNA:RNA heteroduplexes with a 3' poly (A) RNA tracking strand. Can promote unwinding and degradation of structured RNA substrates when associated with the nuclear exosome and its cofactors. Can displace a DNA strand while translocating on RNA to ultimately degrade the RNA within a DNA/RNA heteroduplex. Plays a role in DNA damage response. This is Exosome RNA helicase MTR4 from Mus musculus (Mouse).